Reading from the N-terminus, the 931-residue chain is Bifunctional glutamine synthetase adenylyltransferase/adenylyl-removing enzyme (931 aa).

The segment at 1-434 is adenylyl removase; sequence MTLAPADLPV…STEFAALLAP (434 aa). The segment at 441-931 is adenylyl transferase; that stretch reads PDALANYWRS…ACRAAELPFA (491 aa).

It belongs to the GlnE family. Mg(2+) is required as a cofactor.

It carries out the reaction [glutamine synthetase]-O(4)-(5'-adenylyl)-L-tyrosine + phosphate = [glutamine synthetase]-L-tyrosine + ADP. The catalysed reaction is [glutamine synthetase]-L-tyrosine + ATP = [glutamine synthetase]-O(4)-(5'-adenylyl)-L-tyrosine + diphosphate. Functionally, involved in the regulation of glutamine synthetase GlnA, a key enzyme in the process to assimilate ammonia. When cellular nitrogen levels are high, the C-terminal adenylyl transferase (AT) inactivates GlnA by covalent transfer of an adenylyl group from ATP to specific tyrosine residue of GlnA, thus reducing its activity. Conversely, when nitrogen levels are low, the N-terminal adenylyl removase (AR) activates GlnA by removing the adenylyl group by phosphorolysis, increasing its activity. The regulatory region of GlnE binds the signal transduction protein PII (GlnB) which indicates the nitrogen status of the cell. This Stenotrophomonas maltophilia (strain K279a) protein is Bifunctional glutamine synthetase adenylyltransferase/adenylyl-removing enzyme.